Consider the following 999-residue polypeptide: Bifunctional glutamine synthetase adenylyltransferase/adenylyl-removing enzyme (999 aa).

Residues M1 to L493 form an adenylyl removase region. The segment at G498–G999 is adenylyl transferase.

The protein belongs to the GlnE family. Mg(2+) is required as a cofactor.

The enzyme catalyses [glutamine synthetase]-O(4)-(5'-adenylyl)-L-tyrosine + phosphate = [glutamine synthetase]-L-tyrosine + ADP. The catalysed reaction is [glutamine synthetase]-L-tyrosine + ATP = [glutamine synthetase]-O(4)-(5'-adenylyl)-L-tyrosine + diphosphate. In terms of biological role, involved in the regulation of glutamine synthetase GlnA, a key enzyme in the process to assimilate ammonia. When cellular nitrogen levels are high, the C-terminal adenylyl transferase (AT) inactivates GlnA by covalent transfer of an adenylyl group from ATP to specific tyrosine residue of GlnA, thus reducing its activity. Conversely, when nitrogen levels are low, the N-terminal adenylyl removase (AR) activates GlnA by removing the adenylyl group by phosphorolysis, increasing its activity. The regulatory region of GlnE binds the signal transduction protein PII (GlnB) which indicates the nitrogen status of the cell. The sequence is that of Bifunctional glutamine synthetase adenylyltransferase/adenylyl-removing enzyme from Mycolicibacterium smegmatis (strain ATCC 700084 / mc(2)155) (Mycobacterium smegmatis).